Here is an 884-residue protein sequence, read N- to C-terminus: Blastomere cadherin (884 aa).

A signal peptide spans 1-26 (MGGTDKFRYPSVWLCGLLCLLQVVPS). The propeptide occupies 27-157 (INVDVSGCQP…KHTGLKRKKR (131 aa)). 5 consecutive Cadherin domains span residues 158–265 (DWVI…RPKF), 266–378 (TQPV…APIF), 379–489 (DPKT…APVF), 490–595 (VPVV…DNGP), and 596–706 (VPSP…GFDL). The Extracellular segment spans residues 158 to 706 (DWVIPPIKVS…QEKLVAGFDL (549 aa)). 3 N-linked (GlcNAc...) asparagine glycosylation sites follow: asparagine 427, asparagine 560, and asparagine 683. The helical transmembrane segment at 707–730 (PIILVILGSILALLILSLLLLLFL) threads the bilayer. Residues 731–884 (KRKKVVKEPL…YGGDDDDDEE (154 aa)) are Cytoplasmic-facing.

In terms of tissue distribution, expressed in pituitary gland, lung and kidney.

Its subcellular location is the cell membrane. In terms of biological role, cadherins are calcium-dependent cell adhesion proteins. They preferentially interact with themselves in a homophilic manner in connecting cells; cadherins may thus contribute to the sorting of heterogeneous cell types. In Xenopus laevis (African clawed frog), this protein is Blastomere cadherin.